The sequence spans 409 residues: Multifunctional CCA protein (409 aa).

Residues Gly-8 and Arg-11 each contribute to the ATP site. CTP-binding residues include Gly-8 and Arg-11. 2 residues coordinate Mg(2+): Glu-21 and Asp-23. ATP contacts are provided by Arg-91, Arg-137, and Arg-140. 3 residues coordinate CTP: Arg-91, Arg-137, and Arg-140. Residues 228–329 form the HD domain; sequence TGVHTLMVLT…LKALEGLDAF (102 aa).

It belongs to the tRNA nucleotidyltransferase/poly(A) polymerase family. Bacterial CCA-adding enzyme type 1 subfamily. In terms of assembly, monomer. Can also form homodimers and oligomers. It depends on Mg(2+) as a cofactor. Requires Ni(2+) as cofactor.

It catalyses the reaction a tRNA precursor + 2 CTP + ATP = a tRNA with a 3' CCA end + 3 diphosphate. The enzyme catalyses a tRNA with a 3' CCA end + 2 CTP + ATP = a tRNA with a 3' CCACCA end + 3 diphosphate. Its function is as follows. Catalyzes the addition and repair of the essential 3'-terminal CCA sequence in tRNAs without using a nucleic acid template. Adds these three nucleotides in the order of C, C, and A to the tRNA nucleotide-73, using CTP and ATP as substrates and producing inorganic pyrophosphate. tRNA 3'-terminal CCA addition is required both for tRNA processing and repair. Also involved in tRNA surveillance by mediating tandem CCA addition to generate a CCACCA at the 3' terminus of unstable tRNAs. While stable tRNAs receive only 3'-terminal CCA, unstable tRNAs are marked with CCACCA and rapidly degraded. In Thioalkalivibrio sulfidiphilus (strain HL-EbGR7), this protein is Multifunctional CCA protein.